The chain runs to 543 residues: Probable ubiquitin-conjugating enzyme E2 26 (543 aa).

The tract at residues 1–21 (MEPDVVEIPPPPLIASGSRTR) is disordered. The region spanning 271 to 431 (NWVKKVQADW…VFLLSLKTMV (161 aa)) is the UBC core domain. The Glycyl thioester intermediate role is filled by cysteine 357. The tract at residues 514-543 (LAEKPEPPMSNANTENQSKKKTRKRSRSSR) is disordered. A compositionally biased stretch (basic residues) spans 532 to 543 (KKKTRKRSRSSR).

Belongs to the ubiquitin-conjugating enzyme family.

It catalyses the reaction S-ubiquitinyl-[E1 ubiquitin-activating enzyme]-L-cysteine + [E2 ubiquitin-conjugating enzyme]-L-cysteine = [E1 ubiquitin-activating enzyme]-L-cysteine + S-ubiquitinyl-[E2 ubiquitin-conjugating enzyme]-L-cysteine.. Its pathway is protein modification; protein ubiquitination. In terms of biological role, accepts the ubiquitin from the E1 complex and catalyzes its covalent attachment to other proteins. This chain is Probable ubiquitin-conjugating enzyme E2 26 (UBC26), found in Arabidopsis thaliana (Mouse-ear cress).